The primary structure comprises 102 residues: MEVGIAHYLTVSAVLFTLGIFGIFLNRKNVIIILMSIELILLAVNLNFIAFSAVLGDLVGQVFALFVLTVAAAEAAIGLAILVVFFRNRGSIAVEDINMMKG.

3 helical membrane passes run 5–25 (IAHYLTVSAVLFTLGIFGIFL), 31–51 (IIILMSIELILLAVNLNFIAF), and 66–86 (FVLTVAAAEAAIGLAILVVFF).

Belongs to the complex I subunit 4L family. NDH-1 is composed of 14 different subunits. Subunits NuoA, H, J, K, L, M, N constitute the membrane sector of the complex.

It is found in the cell inner membrane. It catalyses the reaction a quinone + NADH + 5 H(+)(in) = a quinol + NAD(+) + 4 H(+)(out). Its function is as follows. NDH-1 shuttles electrons from NADH, via FMN and iron-sulfur (Fe-S) centers, to quinones in the respiratory chain. The immediate electron acceptor for the enzyme in this species is believed to be ubiquinone. Couples the redox reaction to proton translocation (for every two electrons transferred, four hydrogen ions are translocated across the cytoplasmic membrane), and thus conserves the redox energy in a proton gradient. The chain is NADH-quinone oxidoreductase subunit K from Chelativorans sp. (strain BNC1).